The sequence spans 178 residues: Fatty-acid and retinol-binding protein 1 (178 aa).

The signal sequence occupies residues 1–16 (MYHQLILMALIGVIMA). 2 N-linked (GlcNAc...) asparagine glycosylation sites follow: asparagine 44 and asparagine 75. Coiled-coil stretches lie at residues 67–89 (DAAL…ELRN) and 123–153 (KLDV…ELKA). Asparagine 157 carries N-linked (GlcNAc...) asparagine glycosylation.

Belongs to the fatty-acid and retinol-binding protein (FARBP) family. Post-translationally, N-glycosylated.

Its subcellular location is the secreted. Its function is as follows. Binds retinol and different fatty acids. This chain is Fatty-acid and retinol-binding protein 1, found in Acanthocheilonema viteae (Filarial nematode worm).